Reading from the N-terminus, the 302-residue chain is tRNA pseudouridine synthase B (302 aa).

The active-site Nucleophile is Asp-45.

This sequence belongs to the pseudouridine synthase TruB family. Type 1 subfamily.

It carries out the reaction uridine(55) in tRNA = pseudouridine(55) in tRNA. Functionally, responsible for synthesis of pseudouridine from uracil-55 in the psi GC loop of transfer RNAs. The chain is tRNA pseudouridine synthase B from Francisella philomiragia subsp. philomiragia (strain ATCC 25017 / CCUG 19701 / FSC 153 / O#319-036).